The chain runs to 296 residues: 4-hydroxybenzoate octaprenyltransferase (296 aa).

A run of 8 helical transmembrane segments spans residues 28-48, 51-71, 102-122, 143-163, 174-194, 212-232, 233-253, and 274-294; these read IGTL…SDGI, LAVL…GCVI, LLLT…LNHL, FFPI…PMAF, AWIL…VYAM, FGRY…LLMA, VLGA…IVLL, and FLAN…HTFF.

This sequence belongs to the UbiA prenyltransferase family. Mg(2+) is required as a cofactor.

The protein resides in the cell inner membrane. The enzyme catalyses all-trans-octaprenyl diphosphate + 4-hydroxybenzoate = 4-hydroxy-3-(all-trans-octaprenyl)benzoate + diphosphate. The protein operates within cofactor biosynthesis; ubiquinone biosynthesis. Functionally, catalyzes the prenylation of para-hydroxybenzoate (PHB) with an all-trans polyprenyl group. Mediates the second step in the final reaction sequence of ubiquinone-8 (UQ-8) biosynthesis, which is the condensation of the polyisoprenoid side chain with PHB, generating the first membrane-bound Q intermediate 3-octaprenyl-4-hydroxybenzoate. The chain is 4-hydroxybenzoate octaprenyltransferase from Neisseria gonorrhoeae (strain ATCC 700825 / FA 1090).